Here is a 108-residue protein sequence, read N- to C-terminus: Large ribosomal subunit protein bL31B (108 aa).

Residues 81-108 are disordered; the sequence is KPAQPVQAPAEEGPVVKGKKKAPAKKKK. The segment covering 97 to 108 has biased composition (basic residues); it reads KGKKKAPAKKKK.

The protein belongs to the bacterial ribosomal protein bL31 family. Type B subfamily. Part of the 50S ribosomal subunit.

This Chlamydia caviae (strain ATCC VR-813 / DSM 19441 / 03DC25 / GPIC) (Chlamydophila caviae) protein is Large ribosomal subunit protein bL31B.